Here is a 502-residue protein sequence, read N- to C-terminus: ATP synthase subunit alpha (502 aa).

169–176 (GDRQTGKT) is a binding site for ATP.

Belongs to the ATPase alpha/beta chains family. In terms of assembly, F-type ATPases have 2 components, CF(1) - the catalytic core - and CF(0) - the membrane proton channel. CF(1) has five subunits: alpha(3), beta(3), gamma(1), delta(1), epsilon(1). CF(0) has three main subunits: a(1), b(2) and c(9-12). The alpha and beta chains form an alternating ring which encloses part of the gamma chain. CF(1) is attached to CF(0) by a central stalk formed by the gamma and epsilon chains, while a peripheral stalk is formed by the delta and b chains.

The protein resides in the cell inner membrane. It carries out the reaction ATP + H2O + 4 H(+)(in) = ADP + phosphate + 5 H(+)(out). In terms of biological role, produces ATP from ADP in the presence of a proton gradient across the membrane. The alpha chain is a regulatory subunit. The protein is ATP synthase subunit alpha of Desulfovibrio desulfuricans (strain ATCC 27774 / DSM 6949 / MB).